A 280-amino-acid chain; its full sequence is MGWSGSPLTLPPLRGSPPLPQVERDRTQPQLLAFADAFPSEGRGELRSRERRGEATGRGGLRMTAPTRPLGHLYLVATPRPGQSEAEFLRRVEDALAGGVDTLQLRCKADSGQYGEARPYIALAERLRDLAHARNVPFFVNDRVDVALAAGADGVHLGQNDLPVEWARLMAPGLRVGRSTHRPEDAARALAEAPAYFATGPVHATPTKPGRVAAGLGYVRHIAALRPTLPWYAIGGIDLGNVQAVLDAGATRIAVVRAVLDADDCAAAAHALREALMVNG.

Positions 1-64 are disordered; it reads MGWSGSPLTL…ATGRGGLRMT (64 aa). Residues 42–55 show a composition bias toward basic and acidic residues; it reads GRGELRSRERRGEA. 4-amino-2-methyl-5-(diphosphooxymethyl)pyrimidine contacts are provided by residues 104-108 and Asn-141; that span reads QLRCK. Mg(2+) contacts are provided by Asp-142 and Asp-161. Residue Ser-179 coordinates 4-amino-2-methyl-5-(diphosphooxymethyl)pyrimidine. A 2-[(2R,5Z)-2-carboxy-4-methylthiazol-5(2H)-ylidene]ethyl phosphate-binding site is contributed by 205 to 207; that stretch reads TPT. 4-amino-2-methyl-5-(diphosphooxymethyl)pyrimidine is bound at residue Lys-208. Gly-236 provides a ligand contact to 2-[(2R,5Z)-2-carboxy-4-methylthiazol-5(2H)-ylidene]ethyl phosphate.

Belongs to the thiamine-phosphate synthase family. It depends on Mg(2+) as a cofactor.

It carries out the reaction 2-[(2R,5Z)-2-carboxy-4-methylthiazol-5(2H)-ylidene]ethyl phosphate + 4-amino-2-methyl-5-(diphosphooxymethyl)pyrimidine + 2 H(+) = thiamine phosphate + CO2 + diphosphate. The enzyme catalyses 2-(2-carboxy-4-methylthiazol-5-yl)ethyl phosphate + 4-amino-2-methyl-5-(diphosphooxymethyl)pyrimidine + 2 H(+) = thiamine phosphate + CO2 + diphosphate. The catalysed reaction is 4-methyl-5-(2-phosphooxyethyl)-thiazole + 4-amino-2-methyl-5-(diphosphooxymethyl)pyrimidine + H(+) = thiamine phosphate + diphosphate. It participates in cofactor biosynthesis; thiamine diphosphate biosynthesis; thiamine phosphate from 4-amino-2-methyl-5-diphosphomethylpyrimidine and 4-methyl-5-(2-phosphoethyl)-thiazole: step 1/1. In terms of biological role, condenses 4-methyl-5-(beta-hydroxyethyl)thiazole monophosphate (THZ-P) and 2-methyl-4-amino-5-hydroxymethyl pyrimidine pyrophosphate (HMP-PP) to form thiamine monophosphate (TMP). The chain is Thiamine-phosphate synthase from Deinococcus radiodurans (strain ATCC 13939 / DSM 20539 / JCM 16871 / CCUG 27074 / LMG 4051 / NBRC 15346 / NCIMB 9279 / VKM B-1422 / R1).